The sequence spans 387 residues: Succinyl-diaminopimelate desuccinylase (387 aa).

Histidine 74 provides a ligand contact to Zn(2+). The active site involves aspartate 76. Aspartate 107 is a binding site for Zn(2+). Residue glutamate 142 is the Proton acceptor of the active site. Residues glutamate 143, glutamate 171, and histidine 360 each coordinate Zn(2+).

This sequence belongs to the peptidase M20A family. DapE subfamily. As to quaternary structure, homodimer. Zn(2+) is required as a cofactor. Co(2+) serves as cofactor.

It carries out the reaction N-succinyl-(2S,6S)-2,6-diaminopimelate + H2O = (2S,6S)-2,6-diaminopimelate + succinate. It functions in the pathway amino-acid biosynthesis; L-lysine biosynthesis via DAP pathway; LL-2,6-diaminopimelate from (S)-tetrahydrodipicolinate (succinylase route): step 3/3. In terms of biological role, catalyzes the hydrolysis of N-succinyl-L,L-diaminopimelic acid (SDAP), forming succinate and LL-2,6-diaminopimelate (DAP), an intermediate involved in the bacterial biosynthesis of lysine and meso-diaminopimelic acid, an essential component of bacterial cell walls. The chain is Succinyl-diaminopimelate desuccinylase from Rhodopseudomonas palustris (strain TIE-1).